Here is a 143-residue protein sequence, read N- to C-terminus: Ribonuclease H (143 aa).

In terms of domain architecture, RNase H type-1 spans 1–141 (MKHVEIFTDG…VDKLASDAAL (141 aa)). D9, E47, D69, and D133 together coordinate Mg(2+).

The protein belongs to the RNase H family. Monomer. The cofactor is Mg(2+).

The protein resides in the cytoplasm. It carries out the reaction Endonucleolytic cleavage to 5'-phosphomonoester.. Functionally, endonuclease that specifically degrades the RNA of RNA-DNA hybrids. The chain is Ribonuclease H from Novosphingobium aromaticivorans (strain ATCC 700278 / DSM 12444 / CCUG 56034 / CIP 105152 / NBRC 16084 / F199).